We begin with the raw amino-acid sequence, 360 residues long: Mannose-1-phosphate guanyltransferase beta-A (360 aa).

The protein belongs to the transferase hexapeptide repeat family.

It carries out the reaction alpha-D-mannose 1-phosphate + GTP + H(+) = GDP-alpha-D-mannose + diphosphate. It functions in the pathway nucleotide-sugar biosynthesis; GDP-alpha-D-mannose biosynthesis; GDP-alpha-D-mannose from alpha-D-mannose 1-phosphate (GTP route): step 1/1. The chain is Mannose-1-phosphate guanyltransferase beta-A (gmppb-a) from Xenopus laevis (African clawed frog).